The chain runs to 544 residues: Chaperonin GroEL 1 (544 aa).

Residues 30-33 (TLGP), lysine 51, 87-91 (DGTTT), glycine 415, 479-481 (NAA), and aspartate 495 contribute to the ATP site.

It belongs to the chaperonin (HSP60) family. As to quaternary structure, forms a cylinder of 14 subunits composed of two heptameric rings stacked back-to-back. Interacts with the co-chaperonin GroES.

The protein resides in the cytoplasm. It carries out the reaction ATP + H2O + a folded polypeptide = ADP + phosphate + an unfolded polypeptide.. Its function is as follows. Together with its co-chaperonin GroES, plays an essential role in assisting protein folding. The GroEL-GroES system forms a nano-cage that allows encapsulation of the non-native substrate proteins and provides a physical environment optimized to promote and accelerate protein folding. The polypeptide is Chaperonin GroEL 1 (Vibrio cholerae serotype O1 (strain ATCC 39315 / El Tor Inaba N16961)).